The sequence spans 78 residues: MSRVCELTGAKANNGMAVSHSHIRTKKLQQVNLQKRRLWWEEGKKWVNIKISTKALKSIQKVGLDKFAKSNGVDLQKF.

It belongs to the bacterial ribosomal protein bL28 family.

In Prochlorococcus marinus (strain MIT 9215), this protein is Large ribosomal subunit protein bL28.